Here is a 141-residue protein sequence, read N- to C-terminus: Hemoglobin subunit alpha (141 aa).

The region spanning 1-141 (VLSANDKTNV…VSTVLTSKYR (141 aa)) is the Globin domain. Ser-3 bears the Phosphoserine mark. Lys-7 carries the N6-succinyllysine modification. A Phosphothreonine modification is found at Thr-8. The residue at position 11 (Lys-11) is an N6-succinyllysine. Residue Lys-16 is modified to N6-acetyllysine; alternate. Position 16 is an N6-succinyllysine; alternate (Lys-16). Tyr-24 carries the post-translational modification Phosphotyrosine. Ser-35 is subject to Phosphoserine. Lys-40 is subject to N6-succinyllysine. At Ser-49 the chain carries Phosphoserine. An O2-binding site is contributed by Gln-58. A heme b-binding site is contributed by His-87. Thr-108 is modified (phosphothreonine). Ser-124 and Ser-131 each carry phosphoserine. 2 positions are modified to phosphothreonine: Thr-134 and Thr-137. Residue Ser-138 is modified to Phosphoserine.

It belongs to the globin family. As to quaternary structure, heterotetramer of two alpha chains and two beta chains. As to expression, red blood cells.

Functionally, involved in oxygen transport from the lung to the various peripheral tissues. Its function is as follows. Hemopressin acts as an antagonist peptide of the cannabinoid receptor CNR1. Hemopressin-binding efficiently blocks cannabinoid receptor CNR1 and subsequent signaling. The polypeptide is Hemoglobin subunit alpha (HBA) (Didelphis virginiana (North American opossum)).